Consider the following 71-residue polypeptide: ATP synthase subunit c (71 aa).

2 consecutive transmembrane segments (helical) span residues 4 to 24 (IAAA…NGQV) and 47 to 67 (FIGV…ALIL).

This sequence belongs to the ATPase C chain family. F-type ATPases have 2 components, F(1) - the catalytic core - and F(0) - the membrane proton channel. F(1) has five subunits: alpha(3), beta(3), gamma(1), delta(1), epsilon(1). F(0) has three main subunits: a(1), b(2) and c(10-14). The alpha and beta chains form an alternating ring which encloses part of the gamma chain. F(1) is attached to F(0) by a central stalk formed by the gamma and epsilon chains, while a peripheral stalk is formed by the delta and b chains.

It is found in the cell membrane. F(1)F(0) ATP synthase produces ATP from ADP in the presence of a proton or sodium gradient. F-type ATPases consist of two structural domains, F(1) containing the extramembraneous catalytic core and F(0) containing the membrane proton channel, linked together by a central stalk and a peripheral stalk. During catalysis, ATP synthesis in the catalytic domain of F(1) is coupled via a rotary mechanism of the central stalk subunits to proton translocation. Functionally, key component of the F(0) channel; it plays a direct role in translocation across the membrane. A homomeric c-ring of between 10-14 subunits forms the central stalk rotor element with the F(1) delta and epsilon subunits. The polypeptide is ATP synthase subunit c (Enterococcus hirae (strain ATCC 9790 / DSM 20160 / JCM 8729 / LMG 6399 / NBRC 3181 / NCIMB 6459 / NCDO 1258 / NCTC 12367 / WDCM 00089 / R)).